The chain runs to 418 residues: MTSSRLYLRFLRRFSTATGIDSQTTAYPGAITMSKAKSKLRKVQDPDKALAIYKSVSNNSTSPLSSRYAMELTVQRLAKSQRFSDIEALIESHKNNPKIKTETFLSTLIRSYGRASMFDHAMKMFEEMDKLGTPRTVVSFNALLAACLHSDLFERVPQLFDEFPQRYNNITPDKISYGMLIKSYCDSGKPEKAMEIMRDMEVKGVEVTIIAFTTILGSLYKNGLVDEAESLWIEMVNKGCDLDNTVYNVRLMNAAKESPERVKELMEEMSSVGLKPDTVSYNYLMTAYCVKGMMSEAKKVYEGLEQPNAATFRTLIFHLCINGLYDQGLTVFKKSAIVHKIPDFKTCKHLTEGLVKNNRMEDARGVARIVKKKFPPRLVTEWKKLEEKLGLYSKGNAAAVSSSSQTREVLDQEREDDV.

Residues 1–14 (MTSSRLYLRFLRRF) constitute a mitochondrion transit peptide. 8 PPR repeats span residues 101–135 (TETFLSTLIRSYGRASMFDHAMKMFEEMDKLGTPR), 136–166 (TVVSFNALLAACLHSDLFERVPQLFDEFPQR), 173–207 (DKISYGMLIKSYCDSGKPEKAMEIMRDMEVKGVEV), 208–242 (TIIAFTTILGSLYKNGLVDEAESLWIEMVNKGCDL), 243–276 (DNTVYNVRLMNAAKESPERVKELMEEMSSVGLKP), 277–311 (DTVSYNYLMTAYCVKGMMSEAKKVYEGLEQPNAAT), 312–342 (FRTLIFHLCINGLYDQGLTVFKKSAIVHKIP), and 343–373 (DFKTCKHLTEGLVKNNRMEDARGVARIVKKK).

This sequence belongs to the PPR family. P subfamily.

It localises to the mitochondrion. This Arabidopsis thaliana (Mouse-ear cress) protein is Pentatricopeptide repeat-containing protein At2g18520, mitochondrial.